The sequence spans 381 residues: Periphilin-1 (381 aa).

Composition is skewed to basic and acidic residues over residues 1-28 (MWSE…DGYH), 39-65 (PLLD…GYSR), and 79-121 (RSFS…DGFR). 2 disordered regions span residues 1–65 (MWSE…GYSR) and 79–260 (RSFS…KSDE). A Nuclear localization signal motif is present at residues 117-123 (RDGFRRK). Residue Lys-123 forms a Glycyl lysine isopeptide (Lys-Gly) (interchain with G-Cter in SUMO2) linkage. Ser-124, Ser-128, Ser-147, and Ser-154 each carry phosphoserine. A compositionally biased stretch (basic and acidic residues) spans 130–156 (YSRDRSPHKRDAPFFRESPVGRKDSPH). Positions 157–168 (SRSGSSVSSRSY) are enriched in low complexity. Residues 175–187 (THSFHQSQHRKSS) show a composition bias toward basic residues. Ser-181 bears the Phosphoserine mark. Lys-194 participates in a covalent cross-link: Glycyl lysine isopeptide (Lys-Gly) (interchain with G-Cter in SUMO2). Residues 195 to 208 (RQNEAIRGRGKERS) are compositionally biased toward basic and acidic residues. Ser-211 carries the post-translational modification Phosphoserine. A Glycyl lysine isopeptide (Lys-Gly) (interchain with G-Cter in SUMO2) cross-link involves residue Lys-213. Phosphoserine is present on residues Ser-215 and Ser-219. Positions 217-230 (DASPSSSSAVASSK) are enriched in low complexity. Residues 231–260 (ALDKPSRLTEKELAEAESKWANETLEKSDE) are compositionally biased toward basic and acidic residues. Residue Lys-241 forms a Glycyl lysine isopeptide (Lys-Gly) (interchain with G-Cter in SUMO2) linkage. Lys-249 is subject to N6-acetyllysine; alternate. Residue Lys-249 forms a Glycyl lysine isopeptide (Lys-Gly) (interchain with G-Cter in SUMO2); alternate linkage. Residue Ser-339 is modified to Phosphoserine. Lys-342 is covalently cross-linked (Glycyl lysine isopeptide (Lys-Gly) (interchain with G-Cter in SUMO2)).

Homodimer. Component of the HUSH complex; at least composed of TASOR, PPHLN1 and MPHOSPH8. Interacts with SIN3A and HDAC1. May interact with PPL. In terms of tissue distribution, ubiquitously expressed. Strong expression in the developing somites and limbs, the embryonic nervous system and the adult brain.

The protein resides in the nucleus. It is found in the cytoplasm. Its subcellular location is the chromosome. In terms of biological role, component of the HUSH complex, a multiprotein complex that mediates epigenetic repression. The HUSH complex is recruited to genomic loci rich in H3K9me3 and is probably required to maintain transcriptional silencing by promoting recruitment of SETDB1, a histone methyltransferase that mediates further deposition of H3K9me3. In the HUSH complex, contributes to the maintenance of the complex at chromatin. Acts as a transcriptional corepressor and regulates the cell cycle, probably via the HUSH complex. The HUSH complex is also involved in the silencing of unintegrated retroviral DNA: some part of the retroviral DNA formed immediately after infection remains unintegrated in the host genome and is transcriptionally repressed. May be involved in epithelial differentiation by contributing to epidermal integrity and barrier formation. The protein is Periphilin-1 of Mus musculus (Mouse).